The sequence spans 312 residues: Phospholipid phosphatase 3 (312 aa).

Topologically, residues 1–33 (MQSYKYDKAIVPESKNGGSPALNNNPRKGGSKR) are cytoplasmic. Position 19 is a phosphoserine (serine 19). Residues 34 to 54 (VLLICLDLFCLFMAALPFLII) form a helical membrane-spanning segment. Topologically, residues 55–85 (ETSTIKPYRRGFYCNDESIKYPLKVSETIND) are extracellular. A helical membrane pass occupies residues 86 to 106 (AVLCAVGIVIAILRIITGEFY). Residues 107–123 (RIYYLKEKSRSTIQNPY) are Cytoplasmic-facing. Residues 109-110 (YY) carry the Dityrosine basolateral targeting motif motif. A helical transmembrane segment spans residues 124-144 (VAALYKQVGCFLFGCAISQSF). Residues 145–194 (TDIAKVSIGRLRPHFLSVCDPDFSQINCSEGYIQNYRCRGEDSKVQEARK) lie on the Extracellular side of the membrane. The segment at 149–157 (KVSIGRLRP) is phosphatase sequence motif I. Asparagine 171 is a glycosylation site (N-linked (GlcNAc...) asparagine). The Integrin-binding motif motif lies at 183 to 185 (RGE). A helical membrane pass occupies residues 195–215 (SFFSGHASFSMFTMLYLVLYL). The interval 197–200 (FSGH) is phosphatase sequence motif II. The Proton donors role is filled by histidine 200. Residues 216-226 (QARFTWRGARL) are Cytoplasmic-facing. Residues 227–244 (LRPLLQFTLLMMAFYTGL) form a helical membrane-spanning segment. The phosphatase sequence motif III stretch occupies residues 245–256 (SRVSDYKHHPSD). Residues 245–258 (SRVSDYKHHPSDVL) lie on the Extracellular side of the membrane. Histidine 252 acts as the Nucleophile in catalysis. Residues 259–279 (AGFAQGALVACCIVFFVSDLF) form a helical membrane-spanning segment. A mediates interaction with CTNND1 region spans residues 276 to 312 (SDLFKTKTTLSLPAPAIRREILSPVDIMDRSNHHNMV). The Cytoplasmic segment spans residues 280-312 (KTKTTLSLPAPAIRREILSPVDIMDRSNHHNMV).

It belongs to the PA-phosphatase related phosphoesterase family. As to quaternary structure, forms functional homodimers and homooligomers that are not required for substrate recognition and catalytic activity. Can also form heterooligomers with other PLPP2 and PLPP3. Interacts with CTNND1; negatively regulates the PLPP3-mediated stabilization of beta-catenin/CTNNB1. Post-translationally, N-glycosylated. Contains high-mannose oligosaccharides. Detected in epithelial cells of intestinal mucosa, lung, liver and brain.

It localises to the cell membrane. The protein resides in the basolateral cell membrane. The protein localises to the endoplasmic reticulum membrane. Its subcellular location is the endoplasmic reticulum-Golgi intermediate compartment membrane. It is found in the golgi apparatus membrane. It localises to the golgi apparatus. The protein resides in the trans-Golgi network membrane. The protein localises to the membrane raft. The catalysed reaction is a 1,2-diacyl-sn-glycero-3-phosphate + H2O = a 1,2-diacyl-sn-glycerol + phosphate. It carries out the reaction 1,2-dihexadecanoyl-sn-glycero-3-phosphate + H2O = 1,2-dihexadecanoyl-sn-glycerol + phosphate. It catalyses the reaction 1,2-di-(9Z-octadecenoyl)-sn-glycero-3-phosphate + H2O = 1,2-di-(9Z-octadecenoyl)-sn-glycerol + phosphate. The enzyme catalyses a monoacyl-sn-glycero-3-phosphate + H2O = a monoacylglycerol + phosphate. The catalysed reaction is (9Z)-octadecenoyl-sn-glycero-3-phosphate + H2O = (9Z-octadecenoyl)-glycerol + phosphate. It carries out the reaction sphing-4-enine 1-phosphate + H2O = sphing-4-enine + phosphate. It catalyses the reaction an N-acylsphing-4-enine 1-phosphate + H2O = an N-acylsphing-4-enine + phosphate. The enzyme catalyses N-(octanoyl)-sphing-4-enine-1-phosphate + H2O = N-octanoylsphing-4-enine + phosphate. The catalysed reaction is N-(9Z-octadecenoyl)-ethanolamine phosphate + H2O = N-(9Z-octadecenoyl) ethanolamine + phosphate. Its pathway is lipid metabolism; phospholipid metabolism. With respect to regulation, magnesium-independent phospholipid phosphatase. Insensitive to N-ethylmaleimide. Inhibited by sphingosine, zinc ions and modestly by propanolol. Magnesium-independent phospholipid phosphatase of the plasma membrane that catalyzes the dephosphorylation of a variety of glycerolipid and sphingolipid phosphate esters including phosphatidate/PA, lysophosphatidate/LPA, diacylglycerol pyrophosphate/DGPP, sphingosine 1-phosphate/S1P and ceramide 1-phosphate/C1P. Also acts on N-oleoyl ethanolamine phosphate/N-(9Z-octadecenoyl)-ethanolamine phosphate, a potential physiological compound. Has both an extracellular and an intracellular phosphatase activity, allowing the hydrolysis and the cellular uptake of these bioactive lipid mediators from the milieu, regulating signal transduction in different cellular processes. Through the dephosphorylation of extracellular sphingosine-1-phosphate and the regulation of its extra- and intracellular availability, plays a role in vascular homeostasis, regulating endothelial cell migration, adhesion, survival, proliferation and the production of pro-inflammatory cytokines. By maintaining the appropriate levels of this lipid in the cerebellum, also ensure its proper development and function. Through its intracellular lipid phosphatase activity may act in early compartments of the secretory pathway, regulating the formation of Golgi to endoplasmic reticulum retrograde transport carriers. In terms of biological role, independently of this phosphatase activity may also function in the Wnt signaling pathway and the stabilization of beta-catenin/CTNNB1, thereby regulating cell proliferation, migration and differentiation in angiogenesis or yet in tumor growth. Also plays a role in integrin-mediated cell-cell adhesion in angiogenesis. This is Phospholipid phosphatase 3 from Rattus norvegicus (Rat).